A 43-amino-acid polypeptide reads, in one-letter code: Protein PsbN (43 aa).

Residues 7-27 (IAIFISCLIVSFTGYALYTAF) traverse the membrane as a helical segment.

This sequence belongs to the PsbN family.

Its subcellular location is the plastid. It is found in the chloroplast thylakoid membrane. Its function is as follows. May play a role in photosystem I and II biogenesis. This is Protein PsbN from Psilotum nudum (Whisk fern).